The sequence spans 177 residues: ATP synthase subunit delta (177 aa).

This sequence belongs to the ATPase delta chain family. F-type ATPases have 2 components, F(1) - the catalytic core - and F(0) - the membrane proton channel. F(1) has five subunits: alpha(3), beta(3), gamma(1), delta(1), epsilon(1). F(0) has three main subunits: a(1), b(2) and c(10-14). The alpha and beta chains form an alternating ring which encloses part of the gamma chain. F(1) is attached to F(0) by a central stalk formed by the gamma and epsilon chains, while a peripheral stalk is formed by the delta and b chains.

It localises to the cell inner membrane. Its function is as follows. F(1)F(0) ATP synthase produces ATP from ADP in the presence of a proton or sodium gradient. F-type ATPases consist of two structural domains, F(1) containing the extramembraneous catalytic core and F(0) containing the membrane proton channel, linked together by a central stalk and a peripheral stalk. During catalysis, ATP synthesis in the catalytic domain of F(1) is coupled via a rotary mechanism of the central stalk subunits to proton translocation. In terms of biological role, this protein is part of the stalk that links CF(0) to CF(1). It either transmits conformational changes from CF(0) to CF(1) or is implicated in proton conduction. This chain is ATP synthase subunit delta, found in Shewanella pealeana (strain ATCC 700345 / ANG-SQ1).